The sequence spans 292 residues: Shikimate dehydrogenase (NADP(+)) (292 aa).

Shikimate is bound by residues 22–24 and serine 69; that span reads SLS. Residue lysine 73 is the Proton acceptor of the active site. Positions 94 and 111 each coordinate shikimate. Residues 135 to 139 and isoleucine 236 contribute to the NADP(+) site; that span reads GVGGA. Tyrosine 238 provides a ligand contact to shikimate. Residue glycine 260 participates in NADP(+) binding.

It belongs to the shikimate dehydrogenase family. Homodimer.

The catalysed reaction is shikimate + NADP(+) = 3-dehydroshikimate + NADPH + H(+). It functions in the pathway metabolic intermediate biosynthesis; chorismate biosynthesis; chorismate from D-erythrose 4-phosphate and phosphoenolpyruvate: step 4/7. In terms of biological role, involved in the biosynthesis of the chorismate, which leads to the biosynthesis of aromatic amino acids. Catalyzes the reversible NADPH linked reduction of 3-dehydroshikimate (DHSA) to yield shikimate (SA). In Streptococcus pyogenes serotype M3 (strain ATCC BAA-595 / MGAS315), this protein is Shikimate dehydrogenase (NADP(+)).